The following is a 149-amino-acid chain: Nucleoside diphosphate kinase (149 aa).

Positions 9, 57, 85, 91, 102, and 112 each coordinate ATP. H115 (pros-phosphohistidine intermediate) is an active-site residue.

Belongs to the NDK family. In terms of assembly, homotetramer. Mg(2+) serves as cofactor.

The protein localises to the cytoplasm. The catalysed reaction is a 2'-deoxyribonucleoside 5'-diphosphate + ATP = a 2'-deoxyribonucleoside 5'-triphosphate + ADP. The enzyme catalyses a ribonucleoside 5'-diphosphate + ATP = a ribonucleoside 5'-triphosphate + ADP. Its function is as follows. Major role in the synthesis of nucleoside triphosphates other than ATP. The ATP gamma phosphate is transferred to the NDP beta phosphate via a ping-pong mechanism, using a phosphorylated active-site intermediate. The chain is Nucleoside diphosphate kinase from Staphylococcus aureus (strain MSSA476).